The chain runs to 231 residues: Ion-translocating oxidoreductase complex subunit E (231 aa).

Transmembrane regions (helical) follow at residues 18-38, 39-59, 63-83, 86-106, 125-145, and 182-202; these read ALVQLLGLCPLLAVTSTATNA, LGLGLATTLVLTLTNLTISTL, TPAEIRIPIYVMIIASVVSAV, LINAYAFGLYQSLGIFIPLIV, ALSALDGFSIGMGATCAMFVL, and PFLLAMLPPGAFIGLGLMLAG.

It belongs to the NqrDE/RnfAE family. As to quaternary structure, the complex is composed of six subunits: RsxA, RsxB, RsxC, RsxD, RsxE and RsxG.

The protein localises to the cell inner membrane. In terms of biological role, part of a membrane-bound complex that couples electron transfer with translocation of ions across the membrane. Required to maintain the reduced state of SoxR. The chain is Ion-translocating oxidoreductase complex subunit E from Escherichia coli O1:K1 / APEC.